The primary structure comprises 275 residues: Transcription factor Ovo-like 2 (275 aa).

The interval 15-101 is disordered; sequence SVRSWDELPD…GHLATKQRPV (87 aa). Basic and acidic residues-rich tracts occupy residues 18–29 and 39–49; these read SWDELPDEKRAD and LLHDPPEDCRS. A compositionally biased stretch (low complexity) spans 56–76; the sequence is GSGSSSAGEPGGAESSSSPHA. Positions 80 to 89 are enriched in acidic residues; it reads ETPEPGDAEG. 4 consecutive C2H2-type zinc fingers follow at residues 119-141, 147-169, 175-198, and 214-237; these read HSCD…LKCH, HLCT…VRTH, YKCN…KKIH, and YVCE…NSAH. At Ser269 the chain carries Phosphoserine.

This sequence belongs to the krueppel C2H2-type zinc-finger protein family. Interacts (via zinc-finger domains) with CEBPA (via bZIP domain); the interaction inhibits the transcription factor activity of CEBPA and is required to repress adipogenesis. In terms of tissue distribution, expressed in testis, ovary, heart and skeletal muscle. Expressed in the cornea, but absent from the corneal endothelium.

The protein localises to the nucleus. Zinc-finger transcription repressor factor. Plays a critical role in maintaining the identity of epithelial lineages by suppressing epithelial-to mesenchymal transition (EMT) mainly through the repression of ZEB1, an EMT inducer. Positively regulates neuronal differentiation. Suppresses cell cycling and terminal differentiation of keratinocytes by directly repressing MYC and NOTCH1. Important for the correct development of primordial germ cells in embryos. Plays dual functions in thermogenesis and adipogenesis to maintain energy balance. Essential for brown/beige adipose tissue-mediated thermogenesis, is necessary for the development of brown adipocytes. In white adipose tissues, limits adipogenesis by blocking CEBPA binding to its transcriptional targets and inhibiting its transcription factor activity. The polypeptide is Transcription factor Ovo-like 2 (Homo sapiens (Human)).